Consider the following 213-residue polypeptide: Large ribosomal subunit protein uL1 (213 aa).

The protein belongs to the universal ribosomal protein uL1 family. Part of the 50S ribosomal subunit.

Binds directly to 23S rRNA. Probably involved in E site tRNA release. Functionally, protein L1 is also a translational repressor protein, it controls the translation of its operon by binding to its mRNA. The chain is Large ribosomal subunit protein uL1 from Nanoarchaeum equitans (strain Kin4-M).